Here is a 469-residue protein sequence, read N- to C-terminus: Dihydrolipoyl dehydrogenase (469 aa).

Residues 40–48 (EKASLGGVC), K57, and A120 contribute to the FAD site. C48 and C53 are oxidised to a cystine. Residues 186 to 190 (GGGAI), E209, and 275 to 278 (AVGV) contribute to the NAD(+) site. Positions 317 and 325 each coordinate FAD. The active-site Proton acceptor is the H450.

It belongs to the class-I pyridine nucleotide-disulfide oxidoreductase family. Homodimer. It depends on FAD as a cofactor.

The protein localises to the cytoplasm. The catalysed reaction is N(6)-[(R)-dihydrolipoyl]-L-lysyl-[protein] + NAD(+) = N(6)-[(R)-lipoyl]-L-lysyl-[protein] + NADH + H(+). Lipoamide dehydrogenase is a component of the alpha-ketoacid dehydrogenase complexes. This is Dihydrolipoyl dehydrogenase (lpd) from Chlorobaculum parvum (strain DSM 263 / NCIMB 8327) (Chlorobium vibrioforme subsp. thiosulfatophilum).